The chain runs to 2271 residues: Serine-rich adhesin for platelets (2271 aa).

The first 89 residues, 1-89, serve as a signal peptide directing secretion; it reads MSKRQKAFHD…VNMLHDQQAF (89 aa). The serine-rich repeat region 1, SRR1 stretch occupies residues 90 to 230; the sequence is AASDAPLTSE…KTSTTSTSTA (141 aa). Over residues 100–111 the composition is skewed to polar residues; sequence LNTQSETVGNQN. Disordered regions lie at residues 100–229, 751–791, and 806–2243; these read LNTQ…STST, NSMS…VVST, and SVSA…GLLG. Over residues 112–128 the composition is skewed to low complexity; sequence STTIEASTSTADSTSVT. Polar residues predominate over residues 129–140; that stretch reads KNSSSVQTSNSD. The segment covering 150–229 has biased composition (low complexity); sequence VTSTTNSTSN…NKTSTTSTST (80 aa). The tract at residues 231–751 is non-repeat region (NRR); that stretch reads PVKLRTFSRL…TTFKYEVTRN (521 aa). Low complexity-rich tracts occupy residues 752 to 791, 806 to 1392, and 1402 to 2214; these read SMSD…VVST, SVSA…LSLS, and SNSA…ATSE. The segment at 752–2232 is serine-rich repeat region 2, SRR2; the sequence is SMSDSVSTSG…AQSEKRLPDT (1481 aa). The short motif at 2229-2233 is the LPXTG sorting signal element; that stretch reads LPDTG. A Pentaglycyl murein peptidoglycan amidated threonine modification is found at T2232. A propeptide spans 2233 to 2271 (removed by sortase); it reads GDSIKQNGLLGGVMTLLVGLGLMKRKKKKDENDQDDSQA.

This sequence belongs to the serine-rich repeat protein (SRRP) family. Post-translationally, proteolytically cleaved by a metalloprotease. In terms of processing, glycosylated. It is probable that most of the Ser residues in SSR1 and SSR2 are O-GlcNAcylated. Sequential glycosylation by sugar transferases are able to generate complex sugar polymorphisms.

The protein localises to the secreted. The protein resides in the cell wall. In terms of biological role, mediates binding to human platelets, possibly through a receptor-ligand interaction. Probably associated with virulence in endovascular infection. In Staphylococcus aureus (strain Mu50 / ATCC 700699), this protein is Serine-rich adhesin for platelets (sraP).